The following is a 275-amino-acid chain: 3-methyl-2-oxobutanoate hydroxymethyltransferase (275 aa).

Mg(2+)-binding residues include Asp44 and Asp83. Residues 44-45 (DS), Asp83, and Lys113 each bind 3-methyl-2-oxobutanoate. Glu115 serves as a coordination point for Mg(2+). Residue Glu182 is the Proton acceptor of the active site.

It belongs to the PanB family. Homodecamer; pentamer of dimers. Requires Mg(2+) as cofactor.

The protein resides in the cytoplasm. The catalysed reaction is 3-methyl-2-oxobutanoate + (6R)-5,10-methylene-5,6,7,8-tetrahydrofolate + H2O = 2-dehydropantoate + (6S)-5,6,7,8-tetrahydrofolate. It participates in cofactor biosynthesis; (R)-pantothenate biosynthesis; (R)-pantoate from 3-methyl-2-oxobutanoate: step 1/2. Its function is as follows. Catalyzes the reversible reaction in which hydroxymethyl group from 5,10-methylenetetrahydrofolate is transferred onto alpha-ketoisovalerate to form ketopantoate. This is 3-methyl-2-oxobutanoate hydroxymethyltransferase from Clostridioides difficile (strain 630) (Peptoclostridium difficile).